The chain runs to 387 residues: Cytochrome b (387 aa).

The next 4 helical transmembrane spans lie at 32–52 (FGSL…LLAC), 76–98 (FLLR…LHIG), 113–133 (TWNI…LGYC), and 179–199 (FFSL…MHLI). H82 and H96 together coordinate heme b. 2 residues coordinate heme b: H183 and H197. H202 contacts a ubiquinone. The next 4 helical transmembrane spans lie at 225-245 (YLIK…YMAF), 289-309 (QLGV…PLLD), 321-341 (FGKF…WIGG), and 348-368 (FITI…ILIP).

Belongs to the cytochrome b family. Fungal cytochrome b-c1 complex contains 10 subunits; 3 respiratory subunits, 2 core proteins and 5 low-molecular weight proteins. Cytochrome b-c1 complex is a homodimer. Heme b serves as cofactor.

Its subcellular location is the mitochondrion inner membrane. In terms of biological role, component of the ubiquinol-cytochrome c reductase complex (complex III or cytochrome b-c1 complex) that is part of the mitochondrial respiratory chain. The b-c1 complex mediates electron transfer from ubiquinol to cytochrome c. Contributes to the generation of a proton gradient across the mitochondrial membrane that is then used for ATP synthesis. The polypeptide is Cytochrome b (cob) (Schizosaccharomyces pombe (strain 972 / ATCC 24843) (Fission yeast)).